We begin with the raw amino-acid sequence, 277 residues long: 3-methyl-2-oxobutanoate hydroxymethyltransferase (277 aa).

Mg(2+) is bound by residues D49 and D88. 3-methyl-2-oxobutanoate is bound by residues 49–50 (DS), D88, and K118. A Mg(2+)-binding site is contributed by E120. E186 serves as the catalytic Proton acceptor.

Belongs to the PanB family. In terms of assembly, homodecamer; pentamer of dimers. The cofactor is Mg(2+).

Its subcellular location is the cytoplasm. It carries out the reaction 3-methyl-2-oxobutanoate + (6R)-5,10-methylene-5,6,7,8-tetrahydrofolate + H2O = 2-dehydropantoate + (6S)-5,6,7,8-tetrahydrofolate. Its pathway is cofactor biosynthesis; (R)-pantothenate biosynthesis; (R)-pantoate from 3-methyl-2-oxobutanoate: step 1/2. Its function is as follows. Catalyzes the reversible reaction in which hydroxymethyl group from 5,10-methylenetetrahydrofolate is transferred onto alpha-ketoisovalerate to form ketopantoate. This chain is 3-methyl-2-oxobutanoate hydroxymethyltransferase, found in Cereibacter sphaeroides (strain ATCC 17029 / ATH 2.4.9) (Rhodobacter sphaeroides).